The following is a 29-amino-acid chain: Cytochrome b6-f complex subunit 8 (29 aa).

The helical transmembrane segment at 3–23 threads the bilayer; sequence ILSLGWAALMTMFTFSLALTV.

This sequence belongs to the PetN family. The 4 large subunits of the cytochrome b6-f complex are cytochrome b6, subunit IV (17 kDa polypeptide, PetD), cytochrome f and the Rieske protein, while the 4 small subunits are PetG, PetL, PetM and PetN. The complex functions as a dimer.

It localises to the plastid. Its subcellular location is the chloroplast thylakoid membrane. Component of the cytochrome b6-f complex, which mediates electron transfer between photosystem II (PSII) and photosystem I (PSI), cyclic electron flow around PSI, and state transitions. The chain is Cytochrome b6-f complex subunit 8 from Phaeodactylum tricornutum (strain CCAP 1055/1).